Here is an 883-residue protein sequence, read N- to C-terminus: Valine--tRNA ligase (883 aa).

A 'HIGH' region motif is present at residues 46–56; sequence PNVTGKLHLGH. The short motif at 520 to 524 is the 'KMSKS' region element; sequence KMSKS. ATP is bound at residue Lys-523. Residues 809-883 are a coiled coil; sequence LADLLNVEEE…RIDEMKKLVK (75 aa).

This sequence belongs to the class-I aminoacyl-tRNA synthetase family. ValS type 1 subfamily. As to quaternary structure, monomer.

It localises to the cytoplasm. The catalysed reaction is tRNA(Val) + L-valine + ATP = L-valyl-tRNA(Val) + AMP + diphosphate. Its function is as follows. Catalyzes the attachment of valine to tRNA(Val). As ValRS can inadvertently accommodate and process structurally similar amino acids such as threonine, to avoid such errors, it has a 'posttransfer' editing activity that hydrolyzes mischarged Thr-tRNA(Val) in a tRNA-dependent manner. In Streptococcus pneumoniae serotype 4 (strain ATCC BAA-334 / TIGR4), this protein is Valine--tRNA ligase.